Consider the following 136-residue polypeptide: ATP synthase F(0) complex subunit C1, mitochondrial (136 aa).

Residues methionine 1–arginine 61 constitute a mitochondrion transit peptide. A helical transmembrane segment spans residues valine 77 to tyrosine 97. At lysine 104 the chain carries N6,N6,N6-trimethyllysine. The chain crosses the membrane as a helical span at residues isoleucine 112–isoleucine 132.

Belongs to the ATPase C chain family. In terms of assembly, homooctamer; the c-ring consists of eight c subunits forming a circle, and each subunit adopts a hairpin shape. Component of the ATP synthase complex composed at least of ATP5F1A/subunit alpha, ATP5F1B/subunit beta, ATP5MC1/subunit c (homooctomer), MT-ATP6/subunit a, MT-ATP8/subunit 8, ATP5ME/subunit e, ATP5MF/subunit f, ATP5MG/subunit g, ATP5MK/subunit k, ATP5MJ/subunit j, ATP5F1C/subunit gamma, ATP5F1D/subunit delta, ATP5F1E/subunit epsilon, ATP5PF/subunit F6, ATP5PB/subunit b, ATP5PD/subunit d, ATP5PO/subunit OSCP. ATP synthase complex consists of a soluble F(1) head domain (subunits alpha(3) and beta(3)) - the catalytic core - and a membrane F(0) domain - the membrane proton channel (subunits c, a, 8, e, f, g, k and j). These two domains are linked by a central stalk (subunits gamma, delta, and epsilon) rotating inside the F1 region and a stationary peripheral stalk (subunits F6, b, d, and OSCP). Interacts with TMEM70 (homooligomer form); this interaction facilitates the oligomer formation of subunit c/ATP5MC1 (c-ring) and the c-ring membrane insertion and also protects ATP5MC1 against intramitochondrial proteolysis. Post-translationally, trimethylated by ATPSCKMT at Lys-104. Methylation is required for proper incorporation of the C subunit into the ATP synthase complex and mitochondrial respiration.

It is found in the mitochondrion membrane. It catalyses the reaction H(+)(in) = H(+)(out). Subunit c, of the mitochondrial membrane ATP synthase complex (F(1)F(0) ATP synthase or Complex V) that produces ATP from ADP in the presence of a proton gradient across the membrane which is generated by electron transport complexes of the respiratory chain. ATP synthase complex consist of a soluble F(1) head domain - the catalytic core - and a membrane F(1) domain - the membrane proton channel. These two domains are linked by a central stalk rotating inside the F(1) region and a stationary peripheral stalk. During catalysis, ATP synthesis in the catalytic domain of F(1) is coupled via a rotary mechanism of the central stalk subunits to proton translocation. With the subunit a (MT-ATP6), forms the proton-conducting channel in the F(0) domain, that contains two crucial half-channels (inlet and outlet) that facilitate proton movement from the mitochondrial intermembrane space (IMS) into the matrix. Protons are taken up via the inlet half-channel and released through the outlet half-channel, following a Grotthuss mechanism. The sequence is that of ATP synthase F(0) complex subunit C1, mitochondrial from Rattus norvegicus (Rat).